The following is a 189-amino-acid chain: ATP-dependent protease subunit HslV (189 aa).

Residue Thr12 is part of the active site. The Na(+) site is built by Ser172, Cys175, and Thr178.

It belongs to the peptidase T1B family. HslV subfamily. In terms of assembly, a double ring-shaped homohexamer of HslV is capped on each side by a ring-shaped HslU homohexamer. The assembly of the HslU/HslV complex is dependent on binding of ATP.

It localises to the cytoplasm. It catalyses the reaction ATP-dependent cleavage of peptide bonds with broad specificity.. Allosterically activated by HslU binding. Its function is as follows. Protease subunit of a proteasome-like degradation complex believed to be a general protein degrading machinery. The sequence is that of ATP-dependent protease subunit HslV from Ehrlichia canis (strain Jake).